The chain runs to 91 residues: Bacterial microcompartment shell vertex protein PduN (91 aa).

The 87-residue stretch at 1-87 (MHLARVTGAV…IDLAVVGIVD (87 aa)) folds into the BMV domain.

The protein belongs to the CcmL/EutN family. Homopentamer. Interacts with shell protein PduA.

It localises to the bacterial microcompartment. It functions in the pathway polyol metabolism; 1,2-propanediol degradation. In terms of biological role, probably forms vertices in the shell of the bacterial microcompartment (BMC) dedicated to 1,2-propanediol (1,2-PD) degradation. Required for structural integrity of BMCs and to mitigate propionaldehyde toxicity. Functionally, the 1,2-PD-specific bacterial microcompartment (BMC) concentrates low levels of 1,2-PD catabolic enzymes, concentrates volatile reaction intermediates thus enhancing pathway flux and keeps the level of toxic, mutagenic propionaldehyde low. The polypeptide is Bacterial microcompartment shell vertex protein PduN (Salmonella typhimurium (strain LT2 / SGSC1412 / ATCC 700720)).